The following is a 202-amino-acid chain: 3-isopropylmalate dehydratase small subunit (202 aa).

It belongs to the LeuD family. LeuD type 1 subfamily. As to quaternary structure, heterodimer of LeuC and LeuD.

The catalysed reaction is (2R,3S)-3-isopropylmalate = (2S)-2-isopropylmalate. The protein operates within amino-acid biosynthesis; L-leucine biosynthesis; L-leucine from 3-methyl-2-oxobutanoate: step 2/4. Its function is as follows. Catalyzes the isomerization between 2-isopropylmalate and 3-isopropylmalate, via the formation of 2-isopropylmaleate. The protein is 3-isopropylmalate dehydratase small subunit of Blochmanniella pennsylvanica (strain BPEN).